We begin with the raw amino-acid sequence, 805 residues long: Acetyl-CoA decarbonylase/synthase complex subunit alpha 3 (805 aa).

Positions 72, 75, 76, 78, 83, and 93 each coordinate [4Fe-4S] cluster. A CO-binding site is contributed by histidine 116. The [Ni-4Fe-4S] cluster site is built by histidine 249, cysteine 277, and cysteine 322. 4Fe-4S ferredoxin-type domains are found at residues 407 to 435 and 445 to 474; these read EEFK…IPEA and EYLE…LNVL. 8 residues coordinate [4Fe-4S] cluster: cysteine 416, cysteine 419, cysteine 422, cysteine 426, cysteine 454, cysteine 457, cysteine 460, and cysteine 464. Residues cysteine 522, cysteine 551, and cysteine 586 each contribute to the [Ni-4Fe-4S] cluster site.

The protein belongs to the Ni-containing carbon monoxide dehydrogenase family. Heterotetramer of two alpha and two epsilon subunits. The ACDS complex is made up of alpha, epsilon, beta, gamma and delta subunits with a probable stoichiometry of (alpha(2)epsilon(2))(4)-beta(8)-(gamma(1)delta(1))(8). It depends on [4Fe-4S] cluster as a cofactor. [Ni-4Fe-4S] cluster is required as a cofactor.

It carries out the reaction CO + 2 oxidized [2Fe-2S]-[ferredoxin] + H2O = 2 reduced [2Fe-2S]-[ferredoxin] + CO2 + 2 H(+). The protein operates within one-carbon metabolism; methanogenesis from acetate. In terms of biological role, part of the ACDS complex that catalyzes the reversible cleavage of acetyl-CoA, allowing growth on acetate as sole source of carbon and energy. The alpha-epsilon subcomponent functions as a carbon monoxide dehydrogenase. This Methanosarcina acetivorans (strain ATCC 35395 / DSM 2834 / JCM 12185 / C2A) protein is Acetyl-CoA decarbonylase/synthase complex subunit alpha 3.